A 174-amino-acid chain; its full sequence is Shikimate kinase 2 (174 aa).

12 to 17 (GCGKTT) contributes to the ATP binding site. T16 and D32 together coordinate Mg(2+). The substrate site is built by D34, R58, and G79. An LID domain region spans residues 112–126 (QAAPEEDLRPTLTGK). ATP is bound at residue R120. Residue R139 participates in substrate binding.

Belongs to the shikimate kinase family. AroL subfamily. Monomer. Requires Mg(2+) as cofactor.

Its subcellular location is the cytoplasm. It catalyses the reaction shikimate + ATP = 3-phosphoshikimate + ADP + H(+). The protein operates within metabolic intermediate biosynthesis; chorismate biosynthesis; chorismate from D-erythrose 4-phosphate and phosphoenolpyruvate: step 5/7. Functionally, catalyzes the specific phosphorylation of the 3-hydroxyl group of shikimic acid using ATP as a cosubstrate. The chain is Shikimate kinase 2 from Shigella boydii serotype 4 (strain Sb227).